The following is a 406-amino-acid chain: Argininosuccinate synthase (406 aa).

9–17 contributes to the ATP binding site; that stretch reads AYSGGLDTS. Tyrosine 86 contributes to the L-citrulline binding site. Residue glycine 116 coordinates ATP. Threonine 118, asparagine 122, and aspartate 123 together coordinate L-aspartate. Asparagine 122 is an L-citrulline binding site. Arginine 126, serine 174, serine 183, glutamate 259, and tyrosine 271 together coordinate L-citrulline.

It belongs to the argininosuccinate synthase family. Type 1 subfamily. In terms of assembly, homotetramer.

The protein localises to the cytoplasm. The enzyme catalyses L-citrulline + L-aspartate + ATP = 2-(N(omega)-L-arginino)succinate + AMP + diphosphate + H(+). It participates in amino-acid biosynthesis; L-arginine biosynthesis; L-arginine from L-ornithine and carbamoyl phosphate: step 2/3. This chain is Argininosuccinate synthase, found in Geobacillus thermodenitrificans (strain NG80-2).